A 791-amino-acid chain; its full sequence is Phenylalanine--tRNA ligase beta subunit (791 aa).

Residues 39–149 enclose the tRNA-binding domain; it reads GDEIQNVVTG…SDTAIGKDIK (111 aa). The region spanning 403-478 is the B5 domain; the sequence is IKERNLKVDS…RIYGYNNIPT (76 aa). The Mg(2+) site is built by D456, D462, E465, and E466. The region spanning 698–791 is the FDX-ACB domain; sequence PKFPAVDRDM…LENNLGAELR (94 aa).

The protein belongs to the phenylalanyl-tRNA synthetase beta subunit family. Type 1 subfamily. In terms of assembly, tetramer of two alpha and two beta subunits. Mg(2+) is required as a cofactor.

Its subcellular location is the cytoplasm. It carries out the reaction tRNA(Phe) + L-phenylalanine + ATP = L-phenylalanyl-tRNA(Phe) + AMP + diphosphate + H(+). The protein is Phenylalanine--tRNA ligase beta subunit of Clostridium tetani (strain Massachusetts / E88).